A 428-amino-acid polypeptide reads, in one-letter code: MEITVSEIQVESKDETRSAEVRPQDERQEEKASMLCFKRRKKAAKAMKPKASSKAADAAKKCPPEARASDQPQRPGGAWDSIKRLVTRRKRSESSKQQKPFKAKLQSEINAEDANPSKKKAKSRLKIPCIKFSKGEKRSNHSKIIEDSDRSVKVQEAENLVTKTQTQSDDQATKSKSPQDVREDVSQKGDDEVCESNVNNSITSPGEKVISVELELDMGHSAIQRGTLILEKDTEMLEEKQSIQPQHVSPLEASDTEQELPVGSEVPPSSAVPDQQILEEARNGVLESGPDWKEHESREIVVEESKPKDTELSQELDFQENEITAEKPKPEESKRMEPIAIIITDTEISEFDVKKSKNVPKPFLISIENEQVGVFANDSGFEGRTSEQYETLLIETASSLVKNAIQLSIEQLVNEMASDDNTINNRLQ.

An essential to the intracellular anchoring function region spans residues 1 to 170; that stretch reads MEITVSEIQV…VTKTQTQSDD (170 aa). Disordered stretches follow at residues 1–207 and 237–313; these read MEIT…SPGE and LEEK…TELS. The span at 10–32 shows a compositional bias: basic and acidic residues; the sequence is VESKDETRSAEVRPQDERQEEKA. A lipid anchor (S-palmitoyl cysteine) is attached at Cys-36. The span at 37-48 shows a compositional bias: basic residues; that stretch reads FKRRKKAAKAMK. Positions 57–68 are enriched in basic and acidic residues; it reads DAAKKCPPEARA. An AKAP CaM-binding motif is present at residues 76-96; the sequence is GGAWDSIKRLVTRRKRSESSK. Position 87 is a phosphothreonine; by PKC (Thr-87). Position 92 is a phosphoserine; by PKA (Ser-92). Ser-94 carries the post-translational modification Phosphoserine; by PKC. Residue Cys-129 is the site of S-palmitoyl cysteine attachment. The segment covering 133–156 has biased composition (basic and acidic residues); it reads SKGEKRSNHSKIIEDSDRSVKVQE. Residues 161 to 170 are compositionally biased toward polar residues; sequence VTKTQTQSDD. Basic and acidic residues-rich tracts occupy residues 171–191 and 290–311; these read QATKSKSPQDVREDVSQKGDD and PDWKEHESREIVVEESKPKDTE. Residues 389-410 are RII-beta subunit binding domain; the sequence is YETLLIETASSLVKNAIQLSIE. The tethers NFATC2 to CRAC channels stretch occupies residues 411–428; sequence QLVNEMASDDNTINNRLQ.

Binding protein for dimer of the RII-beta regulatory subunit of cAMP-dependent protein kinase (PKA) and also for the protein kinase C (PKC) and the phosphatase calcineurin (PP2B). Each enzyme is inhibited when bound to the anchoring protein. Also binds the beta2-adrenergic receptor. Part of a complex containing AKAP5, ADCY5, ADCY6 and PDE4C. Interacts with ADCY8, and enhances its phosphorylation at lipid rafts. Interacts with ORAI1 (isoform alpha) (via N-terminus) upon store depletion and in response to LTC4. Does not interact with ORAI2 and ORAI3 paralogs. Interacts (via leucine zipper domain) with NFATC2/NFAT1. Interacts with calmodulin; the interaction is calcium-independent. Interacts with KCNQ2; the interaction may help KCNQ2 channel complex to retain calcium-bound calmodulin. In terms of processing, palmitoylated. Palmitoylation at Cys-36 and Cys-129 play a key role in the targeting of AKAP5 to lipid rafts. Palmitoylation by ZDHHC2 is required for AKAP5 function in LTP-stimulated recycling endosome exocytosis. As to expression, predominantly in brain, and to a lesser extent in adrenal medulla, lung and anterior pituitary.

Its subcellular location is the postsynaptic recycling endosome membrane. Its function is as follows. Multivalent scaffold protein that anchors the cAMP-dependent protein kinase/PKA to cytoskeletal and/or organelle-associated proteins, targeting the signal carried by cAMP to specific intracellular effectors. Association with the beta2-adrenergic receptor (beta2-AR) not only regulates beta2-AR signaling pathway, but also the activation by PKA by switching off the beta2-AR signaling cascade. Plays a role in long term synaptic potentiation by regulating protein trafficking from the dendritic recycling endosomes to the plasma membrane and controlling both structural and functional plasticity at excitatory synapses. Associates with ORAI1 pore-forming subunit of CRAC channels in Ca(2+) signaling microdomains where it recruits NFATC2/NFAT1 and couples store-operated Ca(2+) influx to calmodulin and calcineurin signaling and activation of NFAT-dependent transcriptional responses. In Bos taurus (Bovine), this protein is A-kinase anchor protein 5 (AKAP5).